A 580-amino-acid polypeptide reads, in one-letter code: NADH-quinone oxidoreductase subunit C/D (580 aa).

The NADH dehydrogenase I subunit C stretch occupies residues 1-171 (MSLDQAIPEA…PPFVLTDRLF (171 aa)). The interval 195–580 (ELMVLNFGPH…IDFVMSDVDR (386 aa)) is NADH dehydrogenase I subunit D.

In the N-terminal section; belongs to the complex I 30 kDa subunit family. This sequence in the C-terminal section; belongs to the complex I 49 kDa subunit family. As to quaternary structure, NDH-1 is composed of 13 different subunits. Subunits NuoB, CD, E, F, and G constitute the peripheral sector of the complex.

The protein resides in the cell inner membrane. The catalysed reaction is a quinone + NADH + 5 H(+)(in) = a quinol + NAD(+) + 4 H(+)(out). NDH-1 shuttles electrons from NADH, via FMN and iron-sulfur (Fe-S) centers, to quinones in the respiratory chain. The immediate electron acceptor for the enzyme in this species is believed to be ubiquinone. Couples the redox reaction to proton translocation (for every two electrons transferred, four hydrogen ions are translocated across the cytoplasmic membrane), and thus conserves the redox energy in a proton gradient. The polypeptide is NADH-quinone oxidoreductase subunit C/D (Cereibacter sphaeroides (strain KD131 / KCTC 12085) (Rhodobacter sphaeroides)).